Reading from the N-terminus, the 314-residue chain is Acetaldehyde dehydrogenase 2 (314 aa).

Residue serine 15–isoleucine 18 participates in NAD(+) binding. Residue cysteine 133 is the Acyl-thioester intermediate of the active site. NAD(+) is bound by residues serine 164–asparagine 172 and asparagine 291.

The protein belongs to the acetaldehyde dehydrogenase family.

It carries out the reaction acetaldehyde + NAD(+) + CoA = acetyl-CoA + NADH + H(+). In Pseudomonas putida (strain ATCC 700007 / DSM 6899 / JCM 31910 / BCRC 17059 / LMG 24140 / F1), this protein is Acetaldehyde dehydrogenase 2.